Here is a 305-residue protein sequence, read N- to C-terminus: Probable 2-methylisocitrate lyase 1 (305 aa).

Residue 52–54 (SGA) coordinates substrate. Residues Asp91 and Asp93 each coordinate Mg(2+). Substrate contacts are provided by residues 128–129 (CG), Arg163, Glu193, 216–218 (NMT), Arg247, and Arg276.

The protein belongs to the isocitrate lyase/PEP mutase superfamily. Methylisocitrate lyase family. As to quaternary structure, homotetramer; dimer of dimers. It depends on Mg(2+) as a cofactor.

The enzyme catalyses (2S,3R)-3-hydroxybutane-1,2,3-tricarboxylate = pyruvate + succinate. Functionally, catalyzes the thermodynamically favored C-C bond cleavage of (2R,3S)-2-methylisocitrate to yield pyruvate and succinate via an alpha-carboxy-carbanion intermediate. This Corynebacterium glutamicum (strain ATCC 13032 / DSM 20300 / JCM 1318 / BCRC 11384 / CCUG 27702 / LMG 3730 / NBRC 12168 / NCIMB 10025 / NRRL B-2784 / 534) protein is Probable 2-methylisocitrate lyase 1.